Consider the following 1173-residue polypeptide: Pumilio homolog 2 (1173 aa).

Disordered stretches follow at residues 41-68 (VSSA…PLSG), 265-296 (VSKL…ASPT), 480-518 (QQAA…ESLA), 592-662 (LTGA…SLGF), and 730-759 (PISM…SSSL). Polar residues predominate over residues 287–296 (TPGSRQASPT). Residues 480-492 (QQAATQASQGQQQ) show a composition bias toward low complexity. The segment covering 493–518 (VMRATSNQRPLTPNQAQQGQQPESLA) has biased composition (polar residues). Over residues 606–622 (QQQQQQQQQQHQQQQQQ) the composition is skewed to low complexity. Polar residues predominate over residues 623 to 633 (PNANLHSNSFY). The segment covering 634–657 (GNSTMSNNSQSSSLFSPGPGQPGS) has biased composition (low complexity). Residues 815 to 1155 (GRSRLLEDFR…HILAKLEKYY (341 aa)) form the PUM-HD domain. 9 Pumilio repeats span residues 835 to 870 (DLMG…LVFS), 871 to 906 (EILQ…ALAT), 907 to 942 (RIRG…EMVR), 943 to 978 (ELDG…FIIE), 979 to 1014 (AFKG…PILE), 1015 to 1050 (ELHQ…KIVC), 1051 to 1086 (EVRG…FLID), 1087 to 1129 (EICC…IIMH), and 1130 to 1167 (KIRP…LLVG). The interval 850–854 (SRFIQ) is adenine-nucleotide binding in RNA target. The uracil-nucleotide binding in RNA target stretch occupies residues 886-890 (NYVIQ). Positions 922-926 (CRVIQ) are adenine-nucleotide binding in RNA target. The tract at residues 958–962 (NHVVQ) is non-specific-nucleotide binding in RNA target. Residues 994–998 (CRVIQ) are adenine-nucleotide binding in RNA target. The tract at residues 1030-1034 (NYVIQ) is uracil-nucleotide binding in RNA target. Residues 1066 to 1070 (SNVVE) form a guanine-nucleotide binding in RNA target region. A uracil-nucleotide binding in RNA target region spans residues 1109–1113 (NYVVQ).

In terms of assembly, component of a complex with papd4, sympk, tacc3, parn, dazl and cpeb1. Post-translationally, phosphorylated.

It localises to the cytoplasm. It is found in the P-body. The protein localises to the cytoplasmic granule. Sequence-specific RNA-binding protein that acts as a post-transcriptional repressor by binding the 3'-UTR of mRNA targets. Binds to an RNA consensus sequence, the Pumilio Response Element (PRE), 5'-UGUANAUA-3', that is related to the Nanos Response Element (NRE). Mediates post-transcriptional repression of transcripts via different mechanisms: acts via direct recruitment of deadenylase complexes leading to translational inhibition and mRNA degradation. Also mediates deadenylation-independent repression by promoting accessibility of miRNAs. The protein is Pumilio homolog 2 (pum2) of Xenopus laevis (African clawed frog).